The sequence spans 1325 residues: Nonribosomal peptide synthetase (1325 aa).

Residues Y248–Q644 form an adenylation region. Positions E779–S856 constitute a Carrier domain. O-(pantetheine 4'-phosphoryl)serine is present on S816. The interval E893–L1310 is condensation.

Belongs to the NRP synthetase family. The cofactor is pantetheine 4'-phosphate.

It functions in the pathway antifungal biosynthesis. Its function is as follows. Nonribosomal peptide synthetase; part of the gene cluster that mediates the biosynthesis of the tetrahydropyranyl antifungal agent lanomycin that acts as an inhibitor of CYP51 and blocks the ergosterol biosynthesis. The biosynthesis probably begins with the formation of an hexaketide, followed by methionine mediated alkylation of C-2 and C-6, and methylation of the reduced C-3 oxygen, pyran forming reductive ring closure, oxygenation of C-4, beta-keto reduction, enoyl reduction and dehydration of the remaining oxygens, and finally, acylation with glycine to complete the biosynthesis. The sequence is that of Nonribosomal peptide synthetase from Pyrenophora dematioidea (Helminthosporium dematioideum).